The primary structure comprises 261 residues: Complex I assembly factor TIMMDC1, mitochondrial (261 aa).

3 helical membrane-spanning segments follow: residues 67–87, 131–151, and 183–203; these read LNSV…YGGV, WGWR…CMSV, and AGGI…LLLM.

This sequence belongs to the Tim17/Tim22/Tim23 family. Associates with complex I assembly intermediates during its biogenesis in a NdufAF3 and NdufAF4 dependent manner.

Its subcellular location is the membrane. In terms of biological role, chaperone protein involved in the assembly of the mitochondrial NADH:ubiquinone oxidoreductase complex (complex I). Essential for viability. In Drosophila melanogaster (Fruit fly), this protein is Complex I assembly factor TIMMDC1, mitochondrial.